Consider the following 214-residue polypeptide: uncharacterized protein (214 aa).

4 helical membrane-spanning segments follow: residues 43–63 (IQKPNVIIMYISVLVLFAAHI), 84–104 (IEWAKSNFFRICGALVFIPVI), 116–136 (ALVIFVFLMGFPQRSIMEYFI), and 150–170 (PVTRIFIIGAAVFSCVMFGIF).

It localises to the host membrane. This is an uncharacterized protein from Citrus leprosis virus C (isolate Citrus sinesis/Brazil/Cordeiropolis/2003) (CiLV-C).